A 273-amino-acid polypeptide reads, in one-letter code: Eukaryotic translation initiation factor 3 subunit G-2 (273 aa).

The tract at residues 168 to 192 (PPFMKDGGGGSGGKNWGRGRDRDDS) is disordered. Gly residues predominate over residues 173–183 (DGGGGSGGKNW). Residues 193–271 (SAVRISNLSE…LILCVEWSKP (79 aa)) enclose the RRM domain.

It belongs to the eIF-3 subunit G family. Component of the eukaryotic translation initiation factor 3 (eIF-3) complex. The eIF-3 complex interacts with pix.

The protein resides in the cytoplasm. Its function is as follows. RNA-binding component of the eukaryotic translation initiation factor 3 (eIF-3) complex, which is involved in protein synthesis of a specialized repertoire of mRNAs and, together with other initiation factors, stimulates binding of mRNA and methionyl-tRNAi to the 40S ribosome. The eIF-3 complex specifically targets and initiates translation of a subset of mRNAs involved in cell proliferation. This subunit can bind 18S rRNA. This Drosophila erecta (Fruit fly) protein is Eukaryotic translation initiation factor 3 subunit G-2.